We begin with the raw amino-acid sequence, 173 residues long: Inorganic pyrophosphatase (173 aa).

Substrate is bound by residues lysine 28, arginine 42, and tyrosine 54. Residues aspartate 64, aspartate 69, and aspartate 101 each contribute to the Mg(2+) site. Tyrosine 140 contacts substrate.

Belongs to the PPase family. In terms of assembly, homohexamer. Mg(2+) serves as cofactor.

It is found in the cytoplasm. The catalysed reaction is diphosphate + H2O = 2 phosphate + H(+). Functionally, catalyzes the hydrolysis of inorganic pyrophosphate (PPi) forming two phosphate ions. The sequence is that of Inorganic pyrophosphatase from Helicobacter pylori (strain J99 / ATCC 700824) (Campylobacter pylori J99).